Consider the following 166-residue polypeptide: Protein-export protein SecB (166 aa).

Belongs to the SecB family. As to quaternary structure, homotetramer, a dimer of dimers. One homotetramer interacts with 1 SecA dimer.

It is found in the cytoplasm. Its function is as follows. One of the proteins required for the normal export of preproteins out of the cell cytoplasm. It is a molecular chaperone that binds to a subset of precursor proteins, maintaining them in a translocation-competent state. It also specifically binds to its receptor SecA. The sequence is that of Protein-export protein SecB from Cereibacter sphaeroides (strain ATCC 17029 / ATH 2.4.9) (Rhodobacter sphaeroides).